Here is an 851-residue protein sequence, read N- to C-terminus: DNA mismatch repair protein MutS (851 aa).

ATP is bound at residue 602–609 (GPNMSGKS).

Belongs to the DNA mismatch repair MutS family.

Its function is as follows. This protein is involved in the repair of mismatches in DNA. It is possible that it carries out the mismatch recognition step. This protein has a weak ATPase activity. The chain is DNA mismatch repair protein MutS from Streptococcus pyogenes serotype M18 (strain MGAS8232).